The chain runs to 141 residues: Nucleoside diphosphate kinase (141 aa).

ATP-binding residues include Lys-11, Phe-59, Arg-87, Thr-93, Arg-104, and Asn-114. His-117 (pros-phosphohistidine intermediate) is an active-site residue.

Belongs to the NDK family. Homotetramer. The cofactor is Mg(2+).

It is found in the cytoplasm. The enzyme catalyses a 2'-deoxyribonucleoside 5'-diphosphate + ATP = a 2'-deoxyribonucleoside 5'-triphosphate + ADP. The catalysed reaction is a ribonucleoside 5'-diphosphate + ATP = a ribonucleoside 5'-triphosphate + ADP. In terms of biological role, major role in the synthesis of nucleoside triphosphates other than ATP. The ATP gamma phosphate is transferred to the NDP beta phosphate via a ping-pong mechanism, using a phosphorylated active-site intermediate. In Verminephrobacter eiseniae (strain EF01-2), this protein is Nucleoside diphosphate kinase.